The following is a 543-amino-acid chain: MGQPAAGSILTLLRVLLLPLGPALAQDSPSAPTPGSPLSPTEYERFFALLTPTWKAETTCRLRATHGCRNPTIVQLDQYENHGLVPDGAVCSDLPYASWFESFCQFSQYRCSNHVYYAKRVRCSQPVSILSVNSFKELESPVEVSPTTMTSPVTSHIKATERQSFQAWPERLSNNVEELLQSSLSLAGQEQAAGHKQEQGQEQHKQDPTQEHKQDDGQEQEEQEEEQEEEGKQEEGQSVEDMLGRVGRAGLRIGSEPKPQSLSLSSDPHSFTARVRDVDSAPMMIENIQELIQSAQEMEEMYEEDAYWRSQNHGSLLQLPHKEALLVLCYSIVMNSCVMTPSAKAWKYLEEETFGFGKSVCDNLGRRHMALCPLCAFCSLKLEQCHSEANLQRQQCDASHKTPFISSLLTAQTMSMGTQAGTSESGRFYGLDVYGGLRMDFWCARLATKGCEDIRVSSWLQTEFLSFHNGDFPTKVCDTDYIQYPNYCSFKSQQCLMKNRNRKVSRMRCMQNETYNVLTPSKGEDLVLRWSQEFSTLALSRFG.

A signal peptide spans 1–25 (MGQPAAGSILTLLRVLLLPLGPALA). The pro-ACR binding stretch occupies residues 26–106 (QDSPSAPTPG…ASWFESFCQF (81 aa)). Residues 26–276 (QDSPSAPTPG…DPHSFTARVR (251 aa)) constitute a propeptide, removed in mature form. Residues 187 to 239 (AGQEQAAGHKQEQGQEQHKQDPTQEHKQDDGQEQEEQEEEQEEEGKQEEGQSV) form a disordered region. Over residues 193–216 (AGHKQEQGQEQHKQDPTQEHKQDD) the composition is skewed to basic and acidic residues. Over residues 217–232 (GQEQEEQEEEQEEEGK) the composition is skewed to acidic residues. Residues 319 to 427 (LPHKEALLVL…TQAGTSESGR (109 aa)) form a pro-ACR binding region.

In terms of assembly, binds proacrosin (ACR). Does not bind the mature form of ACR. Post-translationally, the N-terminus is blocked. In terms of processing, phosphorylated on Tyr residues in capacitated sperm. Synthesized as a 60-kDa precursor, the 32-kDa mature form is post-translationally produced by the removal of the N-terminal half of the precursor during sperm maturation in the testis and/or epididymis. In terms of tissue distribution, specifically expressed in testis.

It localises to the secreted. The protein localises to the cytoplasmic vesicle. Its subcellular location is the secretory vesicle. It is found in the acrosome. Acrosomal protein that maintains proacrosin (pro-ACR) as an enzymatically inactive zymogen in the acrosome. Involved also in the acrosome formation. The chain is Acrosin-binding protein (ACRBP) from Cavia porcellus (Guinea pig).